The sequence spans 123 residues: Small ribosomal subunit protein uS17 (123 aa).

This sequence belongs to the universal ribosomal protein uS17 family. Part of the 30S ribosomal subunit.

Its function is as follows. One of the primary rRNA binding proteins, it binds specifically to the 5'-end of 16S ribosomal RNA. In Pyrobaculum aerophilum (strain ATCC 51768 / DSM 7523 / JCM 9630 / CIP 104966 / NBRC 100827 / IM2), this protein is Small ribosomal subunit protein uS17.